Here is a 204-residue protein sequence, read N- to C-terminus: Ribonuclease HII (204 aa).

Positions 1–197 (MILGIDEAGR…KNRILNPKLL (197 aa)) constitute an RNase H type-2 domain. Positions 6, 7, and 103 each coordinate a divalent metal cation.

It belongs to the RNase HII family. The cofactor is Mn(2+). Mg(2+) serves as cofactor.

It localises to the cytoplasm. It catalyses the reaction Endonucleolytic cleavage to 5'-phosphomonoester.. In terms of biological role, endonuclease that specifically degrades the RNA of RNA-DNA hybrids. In Helicobacter pylori (strain Shi470), this protein is Ribonuclease HII.